The sequence spans 397 residues: Dual-specificity RNA methyltransferase RlmN (397 aa).

E116 (proton acceptor) is an active-site residue. A Radical SAM core domain is found at 122 to 366 (EDDRGTLCIS…SPIRKTRGDD (245 aa)). A disulfide bridge links C129 with C371. Positions 136, 140, and 143 each coordinate [4Fe-4S] cluster. S-adenosyl-L-methionine is bound by residues 195 to 196 (GE), S227, 249 to 251 (SFH), and N328. The active-site S-methylcysteine intermediate is the C371.

Belongs to the radical SAM superfamily. RlmN family. Requires [4Fe-4S] cluster as cofactor.

Its subcellular location is the cytoplasm. It carries out the reaction adenosine(2503) in 23S rRNA + 2 reduced [2Fe-2S]-[ferredoxin] + 2 S-adenosyl-L-methionine = 2-methyladenosine(2503) in 23S rRNA + 5'-deoxyadenosine + L-methionine + 2 oxidized [2Fe-2S]-[ferredoxin] + S-adenosyl-L-homocysteine. The catalysed reaction is adenosine(37) in tRNA + 2 reduced [2Fe-2S]-[ferredoxin] + 2 S-adenosyl-L-methionine = 2-methyladenosine(37) in tRNA + 5'-deoxyadenosine + L-methionine + 2 oxidized [2Fe-2S]-[ferredoxin] + S-adenosyl-L-homocysteine. Specifically methylates position 2 of adenine 2503 in 23S rRNA and position 2 of adenine 37 in tRNAs. m2A2503 modification seems to play a crucial role in the proofreading step occurring at the peptidyl transferase center and thus would serve to optimize ribosomal fidelity. In Ruegeria sp. (strain TM1040) (Silicibacter sp.), this protein is Dual-specificity RNA methyltransferase RlmN.